Reading from the N-terminus, the 318-residue chain is Sucrose operon repressor (318 aa).

The HTH lacI-type domain maps to 1–56 (MIKLEDVANKAGVSVTTVSRVINRKGYLSDATISKVEKAMQDLHYIPNAAARSLQG). The segment at residues 4 to 23 (LEDVANKAGVSVTTVSRVIN) is a DNA-binding region (H-T-H motif).

In terms of biological role, this protein may control the expression of the genes that are involved in the transport and catabolism of sucrose. This Lactococcus lactis subsp. lactis (Streptococcus lactis) protein is Sucrose operon repressor (sacR).